A 377-amino-acid polypeptide reads, in one-letter code: N-acetyldiaminopimelate deacetylase (377 aa).

Asp69 is an active-site residue. Glu128 serves as the catalytic Proton acceptor.

Belongs to the peptidase M20A family. N-acetyldiaminopimelate deacetylase subfamily.

It carries out the reaction N-acetyl-(2S,6S)-2,6-diaminopimelate + H2O = (2S,6S)-2,6-diaminopimelate + acetate. It functions in the pathway amino-acid biosynthesis; L-lysine biosynthesis via DAP pathway; LL-2,6-diaminopimelate from (S)-tetrahydrodipicolinate (acetylase route): step 3/3. Its function is as follows. Catalyzes the conversion of N-acetyl-diaminopimelate to diaminopimelate and acetate. The polypeptide is N-acetyldiaminopimelate deacetylase (Streptococcus sanguinis (strain SK36)).